We begin with the raw amino-acid sequence, 314 residues long: 4-diphosphocytidyl-2-C-methyl-D-erythritol kinase (314 aa).

Lysine 11 is a catalytic residue. 99–109 (PMAAGLAGGST) is a binding site for ATP. Aspartate 141 is a catalytic residue.

It belongs to the GHMP kinase family. IspE subfamily.

The enzyme catalyses 4-CDP-2-C-methyl-D-erythritol + ATP = 4-CDP-2-C-methyl-D-erythritol 2-phosphate + ADP + H(+). It functions in the pathway isoprenoid biosynthesis; isopentenyl diphosphate biosynthesis via DXP pathway; isopentenyl diphosphate from 1-deoxy-D-xylulose 5-phosphate: step 3/6. In terms of biological role, catalyzes the phosphorylation of the position 2 hydroxy group of 4-diphosphocytidyl-2C-methyl-D-erythritol. The chain is 4-diphosphocytidyl-2-C-methyl-D-erythritol kinase from Trichodesmium erythraeum (strain IMS101).